We begin with the raw amino-acid sequence, 443 residues long: D(2) dopamine receptor (443 aa).

The Extracellular portion of the chain corresponds to 1-37 (MDPLNLSWYDDDLERQNWSRPFNGSDGKADRPHYNYY). N-linked (GlcNAc...) asparagine glycosylation is found at asparagine 5, asparagine 17, and asparagine 23. The helical transmembrane segment at 38-60 (ATLLTLLIAVIVFGNVLVCMAVS) threads the bilayer. The Cytoplasmic segment spans residues 61–70 (REKALQTTTN). Residues 71–93 (YLIVSLAVADLLVATLVMPWVVY) form a helical membrane-spanning segment. At 94–108 (LEVVGEWKFSKIHCD) the chain is on the extracellular side. Cysteine 107 and cysteine 182 are oxidised to a cystine. Residues 109–130 (IFVTLDVMMCTASILNLCAISI) form a helical membrane-spanning segment. Residues 131-151 (DRYTAVAMPMLYNTRYSSKRR) lie on the Cytoplasmic side of the membrane. The chain crosses the membrane as a helical span at residues 152–172 (VTVMIAIVWVLSFTISCPLLF). The Extracellular portion of the chain corresponds to 173–188 (GLNNADQNECIIANPA). Residues 189–213 (FVVYSSIVSFYVPFIVTLLVYIKIY) form a helical membrane-spanning segment. Positions 211 to 373 (KIYIVLRRRR…SQQKEKKATQ (163 aa)) are interaction with PPP1R9B. The Cytoplasmic segment spans residues 214–373 (IVLRRRRKRV…SQQKEKKATQ (160 aa)). The interval 281-332 (MEMLSSTSPPERTRYSPIPPSHHQLTLPDPSHHGLHSTPDSPAKPEKNGHAK) is disordered. A helical membrane pass occupies residues 374–395 (MLAIVLGVFIICWLPFFITHIL). Over 396–409 (NIHCDCNIPPVLYS) the chain is Extracellular. Cysteines 399 and 401 form a disulfide. The chain crosses the membrane as a helical span at residues 410–431 (AFTWLGYVNSAVNPIIYTTFNI). Over 432–443 (EFRKAFLKILHC) the chain is Cytoplasmic. Cysteine 443 carries S-palmitoyl cysteine lipidation.

The protein belongs to the G-protein coupled receptor 1 family. Forms homo- and heterooligomers with DRD4. The interaction with DRD4 may modulate agonist-induced downstream signaling. Interacts with CADPS and CADPS2. Interacts with GPRASP1, PPP1R9B and CLIC6. Interacts with ARRB2. Interacts with HTR2A. Interacts with DRD1. Interacts with KCNA2. Palmitoylated. Palmitoylation which is required for proper localization to the plasma membrane and stability of the receptor could be carried on by ZDHHC4, ZDHHC3 and ZDHHC8.

The protein localises to the cell membrane. It localises to the golgi apparatus membrane. Its function is as follows. Dopamine receptor whose activity is mediated by G proteins which inhibit adenylyl cyclase. Positively regulates postnatal regression of retinal hyaloid vessels via suppression of VEGFR2/KDR activity, downstream of OPN5. The sequence is that of D(2) dopamine receptor (DRD2) from Chlorocebus aethiops (Green monkey).